A 413-amino-acid polypeptide reads, in one-letter code: Arginine biosynthesis bifunctional protein ArgJ (413 aa).

Substrate contacts are provided by threonine 158, lysine 184, threonine 195, glutamate 285, asparagine 408, and serine 413. The active-site Nucleophile is threonine 195.

The protein belongs to the ArgJ family. As to quaternary structure, heterotetramer of two alpha and two beta chains.

It is found in the cytoplasm. It catalyses the reaction N(2)-acetyl-L-ornithine + L-glutamate = N-acetyl-L-glutamate + L-ornithine. The enzyme catalyses L-glutamate + acetyl-CoA = N-acetyl-L-glutamate + CoA + H(+). Its pathway is amino-acid biosynthesis; L-arginine biosynthesis; L-ornithine and N-acetyl-L-glutamate from L-glutamate and N(2)-acetyl-L-ornithine (cyclic): step 1/1. It participates in amino-acid biosynthesis; L-arginine biosynthesis; N(2)-acetyl-L-ornithine from L-glutamate: step 1/4. Catalyzes two activities which are involved in the cyclic version of arginine biosynthesis: the synthesis of N-acetylglutamate from glutamate and acetyl-CoA as the acetyl donor, and of ornithine by transacetylation between N(2)-acetylornithine and glutamate. The protein is Arginine biosynthesis bifunctional protein ArgJ of Brucella melitensis biotype 1 (strain ATCC 23456 / CCUG 17765 / NCTC 10094 / 16M).